A 395-amino-acid polypeptide reads, in one-letter code: Gastric triacylglycerol lipase (395 aa).

A signal peptide spans 1–18; that stretch reads MWLLLVTSVLSAFGGAHG. N33 carries N-linked (GlcNAc...) asparagine glycosylation. The AB hydrolase-1 domain occupies 81–376; it reads LQHGLIASAT…LPYNHLDFIW (296 aa). S171 (nucleophile) is an active-site residue. The cysteines at positions 245 and 254 are disulfide-linked. A glycan (N-linked (GlcNAc...) asparagine) is linked at N270. Catalysis depends on charge relay system residues D342 and H371.

It belongs to the AB hydrolase superfamily. Lipase family.

Its subcellular location is the secreted. The catalysed reaction is a triacylglycerol + H2O = a diacylglycerol + a fatty acid + H(+). The enzyme catalyses 1,2,3-tri-(9Z-octadecenoyl)-glycerol + H2O = 1,2-di-(9Z-octadecenoyl)-sn-glycerol + (9Z)-octadecenoate + H(+). It carries out the reaction 1,2,3-trioctanoylglycerol + H2O = 1,2-dioctanoyl-sn-glycerol + octanoate + H(+). Catalyzes the hydrolysis of triacylglycerols to yield free fatty acids, diacylglycerol, monoacylglycerol, and glycerol. Shows a preferential hydrolysis at the sn-3 position of triacylglycerol. This is Gastric triacylglycerol lipase (Lipf) from Mus musculus (Mouse).